The primary structure comprises 385 residues: UPF0284 protein PMM0439 (385 aa).

Belongs to the UPF0284 family.

In Prochlorococcus marinus subsp. pastoris (strain CCMP1986 / NIES-2087 / MED4), this protein is UPF0284 protein PMM0439.